Consider the following 183-residue polypeptide: Adenine phosphoribosyltransferase (183 aa).

It belongs to the purine/pyrimidine phosphoribosyltransferase family. Homodimer.

It localises to the cytoplasm. It catalyses the reaction AMP + diphosphate = 5-phospho-alpha-D-ribose 1-diphosphate + adenine. It functions in the pathway purine metabolism; AMP biosynthesis via salvage pathway; AMP from adenine: step 1/1. In terms of biological role, catalyzes a salvage reaction resulting in the formation of AMP, that is energically less costly than de novo synthesis. In Blochmanniella floridana, this protein is Adenine phosphoribosyltransferase.